The chain runs to 70 residues: DNA-directed RNA polymerase subunit epsilon (70 aa).

The protein belongs to the RNA polymerase subunit epsilon family. In terms of assembly, RNAP is composed of a core of 2 alpha, a beta and a beta' subunit. The core is associated with a delta subunit, and at least one of epsilon or omega. When a sigma factor is associated with the core the holoenzyme is formed, which can initiate transcription.

The enzyme catalyses RNA(n) + a ribonucleoside 5'-triphosphate = RNA(n+1) + diphosphate. Its function is as follows. A non-essential component of RNA polymerase (RNAP). The chain is DNA-directed RNA polymerase subunit epsilon from Enterococcus faecalis (strain ATCC 700802 / V583).